The sequence spans 347 residues: Phosphate acyltransferase (347 aa).

It belongs to the PlsX family. In terms of assembly, homodimer. Probably interacts with PlsY.

The protein resides in the cytoplasm. It catalyses the reaction a fatty acyl-[ACP] + phosphate = an acyl phosphate + holo-[ACP]. Its pathway is lipid metabolism; phospholipid metabolism. Its function is as follows. Catalyzes the reversible formation of acyl-phosphate (acyl-PO(4)) from acyl-[acyl-carrier-protein] (acyl-ACP). This enzyme utilizes acyl-ACP as fatty acyl donor, but not acyl-CoA. The chain is Phosphate acyltransferase from Sinorhizobium medicae (strain WSM419) (Ensifer medicae).